Here is a 359-residue protein sequence, read N- to C-terminus: Peptide chain release factor 1 (359 aa).

At Gln236 the chain carries N5-methylglutamine.

Belongs to the prokaryotic/mitochondrial release factor family. In terms of processing, methylated by PrmC. Methylation increases the termination efficiency of RF1.

The protein resides in the cytoplasm. In terms of biological role, peptide chain release factor 1 directs the termination of translation in response to the peptide chain termination codons UAG and UAA. This Streptococcus pyogenes serotype M1 protein is Peptide chain release factor 1.